We begin with the raw amino-acid sequence, 131 residues long: Single-stranded DNA-binding protein 2 (131 aa).

An SSB domain is found at 1–103 (MYNKVIMIGR…VLASSFQLLE (103 aa)). The short motif at 126-131 (EEELPF) is the Important for interaction with partner proteins element.

Homotetramer.

Its function is as follows. Plays an important role in DNA replication, recombination and repair. Binds to ssDNA and to an array of partner proteins to recruit them to their sites of action during DNA metabolism. In Streptococcus agalactiae serotype V (strain ATCC BAA-611 / 2603 V/R), this protein is Single-stranded DNA-binding protein 2 (ssb2).